A 489-amino-acid chain; its full sequence is Betaine aldehyde dehydrogenase (489 aa).

Residues Thr26 and Asp93 each coordinate K(+). Residue 150 to 152 (GAW) participates in NAD(+) binding. The Charge relay system role is filled by Lys162. NAD(+) is bound at residue 176 to 179 (KPSE). Residue Val180 coordinates K(+). 229–232 (GVET) contacts NAD(+). K(+) is bound at residue Leu245. The Proton acceptor role is filled by Glu251. Positions 253, 285, and 386 each coordinate NAD(+). Cys285 serves as the catalytic Nucleophile. Cys285 bears the Cysteine sulfenic acid (-SOH) mark. 2 residues coordinate K(+): Lys456 and Gly459. The Charge relay system role is filled by Glu463.

The protein belongs to the aldehyde dehydrogenase family. As to quaternary structure, dimer of dimers. It depends on K(+) as a cofactor.

The catalysed reaction is betaine aldehyde + NAD(+) + H2O = glycine betaine + NADH + 2 H(+). It functions in the pathway amine and polyamine biosynthesis; betaine biosynthesis via choline pathway; betaine from betaine aldehyde: step 1/1. In terms of biological role, involved in the biosynthesis of the osmoprotectant glycine betaine. Catalyzes the irreversible oxidation of betaine aldehyde to the corresponding acid. In Burkholderia cenocepacia (strain ATCC BAA-245 / DSM 16553 / LMG 16656 / NCTC 13227 / J2315 / CF5610) (Burkholderia cepacia (strain J2315)), this protein is Betaine aldehyde dehydrogenase.